A 78-amino-acid chain; its full sequence is Small ribosomal subunit protein bS18 (78 aa).

The protein belongs to the bacterial ribosomal protein bS18 family. Part of the 30S ribosomal subunit. Forms a tight heterodimer with protein bS6.

Binds as a heterodimer with protein bS6 to the central domain of the 16S rRNA, where it helps stabilize the platform of the 30S subunit. The chain is Small ribosomal subunit protein bS18 from Ligilactobacillus salivarius (strain UCC118) (Lactobacillus salivarius).